A 258-amino-acid polypeptide reads, in one-letter code: Imidazole glycerol phosphate synthase subunit HisF (258 aa).

Catalysis depends on residues aspartate 11 and aspartate 130.

It belongs to the HisA/HisF family. In terms of assembly, heterodimer of HisH and HisF.

It localises to the cytoplasm. The enzyme catalyses 5-[(5-phospho-1-deoxy-D-ribulos-1-ylimino)methylamino]-1-(5-phospho-beta-D-ribosyl)imidazole-4-carboxamide + L-glutamine = D-erythro-1-(imidazol-4-yl)glycerol 3-phosphate + 5-amino-1-(5-phospho-beta-D-ribosyl)imidazole-4-carboxamide + L-glutamate + H(+). The protein operates within amino-acid biosynthesis; L-histidine biosynthesis; L-histidine from 5-phospho-alpha-D-ribose 1-diphosphate: step 5/9. Its function is as follows. IGPS catalyzes the conversion of PRFAR and glutamine to IGP, AICAR and glutamate. The HisF subunit catalyzes the cyclization activity that produces IGP and AICAR from PRFAR using the ammonia provided by the HisH subunit. The polypeptide is Imidazole glycerol phosphate synthase subunit HisF (Stenotrophomonas maltophilia (strain K279a)).